The sequence spans 471 residues: Probable ribonuclease FAU-1 (471 aa).

It belongs to the FAU-1 family.

In terms of biological role, probable RNase involved in rRNA stability through maturation and/or degradation of precursor rRNAs. Binds to RNA in loop regions with AU-rich sequences. The protein is Probable ribonuclease FAU-1 of Caldivirga maquilingensis (strain ATCC 700844 / DSM 13496 / JCM 10307 / IC-167).